The following is a 213-amino-acid chain: Carboxysome shell protein CcmP (213 aa).

2 BMC circularly permuted domains span residues 4–106 and 107–211; these read ELRS…RLKP and KIVS…GDRS. Positions 69–70 match the Probably important for pore gating motif; the sequence is ER.

The protein belongs to the EutL/PduB family. In terms of assembly, a dimer of stacked trimers, the same faces interact.

Its subcellular location is the carboxysome. In terms of biological role, probably part of the carboxysome shell, a polyhedral inclusion where RuBisCO (ribulose bisphosphate carboxylase, rbcL-rbcS) is sequestered. It is thought that this protein controls transport of RuBisCO reactants in and out of the carboxysome; residual densities in the 4 X-ray structures suggest that differing compounds bind in interior pockets, depending on the open or closed state of the pore. This chain is Carboxysome shell protein CcmP, found in Synechococcus elongatus (strain ATCC 33912 / PCC 7942 / FACHB-805) (Anacystis nidulans R2).